A 315-amino-acid polypeptide reads, in one-letter code: Eukaryotic translation initiation factor 2 subunit 1 (315 aa).

Residues 17 to 88 (EDVVMVNVRS…EKGYIDLSKR (72 aa)) enclose the S1 motif domain. Serine 49 is subject to Phosphoserine; by HRI. Serine 52 is subject to Phosphoserine. Lysine 141 is modified (N6-acetyllysine). The residue at position 158 (serine 158) is a Phosphoserine. Phosphothreonine occurs at positions 279 and 281. The tract at residues 293–315 (LERENAEVDGDDDAEEMEAKAED) is disordered. Residues 299–308 (EVDGDDDAEE) are compositionally biased toward acidic residues.

This sequence belongs to the eIF-2-alpha family. Eukaryotic translation initiation factor 2 eIF2 is a heterotrimeric complex composed of an alpha (EIF2S1), a beta (EIF2S2) and a gamma (EIF2S3) chain. eIF2 is member of the 43S pre-initiation complex (43S PIC). eIF2 forms a complex with at least CELF1/CUGBP1, CALR, CALR3, EIF2S1, EIF2S2, HSP90B1 and HSPA5. Interaction with METAP2 protects EIF2S1 from inhibitory phosphorylation. Interacts with ABCF1 isoform 2. Associates with ribosomes. Interacts with DDX3X in an RNA-independent manner. Interacts with CDC123. As to quaternary structure, (Microbial infection) Interacts with rotavirus A non-structural protein 2; this interaction probably plays a role in the sequestration of IF2A in viral factories. Interacts with rotavirus A non-structural protein 5; this interaction probably plays a role in its sequestration in viral factories. Phosphorylation at Ser-49 and Ser-52 stabilizes the eIF-2/GDP/eIF2B complex and prevents GDP/GTP exchange reaction, thus impairing the recycling of eIF-2 between successive rounds of initiation and leading to global inhibition of translation, while concomitantly initiating the preferential translation of integrated stress response (ISR)-specific mRNAs. Substrate for at least 4 kinases: EIF2AK1/HRI, EIF2AK2/PKR, EIF2AK3/PERK and EIF2AK4/GCN2. Phosphorylation on Ser-52 by the EIF2AK4/GCN2 protein kinase occurs in response to amino acid starvation and UV irradiation. Phosphorylation at Ser-52 by the EIF2AK3/PERK protein kinase occurs in response to the unfolded protein response. Phosphorylation at Ser-52 by EIF2AK1/HRI in response to mitochondrial damage promotes relocalization to the mitochondrial surface. Post-translationally, (Microbial infection) Phosphorylation by vaccinia virus protein E3 and rotavirus A stabilizes the eIF-2/GDP/eIF2B complex and prevents GDP/GTP exchange reaction, thus impairing the recycling of eIF-2 between successive rounds of initiation and leading to global inhibition of translation.

The protein resides in the cytoplasm. It is found in the stress granule. It localises to the cytosol. Its subcellular location is the mitochondrion. With respect to regulation, activity is regulated by phosphorylation at Ser-49 and Ser-52, which stabilizes the eIF2/GDP/eIF2B complex and prevents the eIF2B-mediated exchange of GDP for GTP, thereby preventing the formation of the 43S pre-initiation complex (43S PIC). This results in the global attenuation of 5' cap-dependent protein synthesis and concomitant translation of ISR-specific mRNAs that contain a short upstream open reading frame (uORF) in their 5' UTR, such as ATF4, ATF5, DDIT3/CHOP and PPP1R15A/GADD34. In terms of biological role, member of the eIF2 complex that functions in the early steps of protein synthesis by forming a ternary complex with GTP and initiator tRNA. This complex binds to a 40S ribosomal subunit, followed by mRNA binding to form a 43S pre-initiation complex (43S PIC). Junction of the 60S ribosomal subunit to form the 80S initiation complex is preceded by hydrolysis of the GTP bound to eIF2 and release of an eIF2-GDP binary complex. In order for eIF2 to recycle and catalyze another round of initiation, the GDP bound to eIF2 must exchange with GTP by way of a reaction catalyzed by eIF2B. EIF2S1/eIF2-alpha is a key component of the integrated stress response (ISR), required for adaptation to various stress: phosphorylation by metabolic-stress sensing protein kinases (EIF2AK1/HRI, EIF2AK2/PKR, EIF2AK3/PERK and EIF2AK4/GCN2) in response to stress converts EIF2S1/eIF2-alpha in a global protein synthesis inhibitor, leading to an attenuation of cap-dependent translation, while concomitantly initiating the preferential translation of ISR-specific mRNAs, such as the transcriptional activators ATF4 and QRICH1, and hence allowing ATF4- and QRICH1-mediated reprogramming. EIF2S1/eIF2-alpha also acts as an activator of mitophagy in response to mitochondrial damage: phosphorylation by EIF2AK1/HRI promotes relocalization to the mitochondrial surface, thereby triggering PRKN-independent mitophagy. The protein is Eukaryotic translation initiation factor 2 subunit 1 of Homo sapiens (Human).